The chain runs to 354 residues: Uroporphyrinogen decarboxylase (354 aa).

Residues 27–31, Asp-77, Tyr-154, Thr-209, and His-327 contribute to the substrate site; that span reads RQAGR.

The protein belongs to the uroporphyrinogen decarboxylase family. Homodimer.

The protein resides in the cytoplasm. It carries out the reaction uroporphyrinogen III + 4 H(+) = coproporphyrinogen III + 4 CO2. Its pathway is porphyrin-containing compound metabolism; protoporphyrin-IX biosynthesis; coproporphyrinogen-III from 5-aminolevulinate: step 4/4. In terms of biological role, catalyzes the decarboxylation of four acetate groups of uroporphyrinogen-III to yield coproporphyrinogen-III. The sequence is that of Uroporphyrinogen decarboxylase from Escherichia coli O7:K1 (strain IAI39 / ExPEC).